Here is a 650-residue protein sequence, read N- to C-terminus: ATP-binding cassette sub-family G member 3 (650 aa).

The Cytoplasmic segment spans residues 1 to 387; the sequence is MASNNDPTVI…KNFKGFPWVT (387 aa). The ABC transporter domain occupies 37–279; that stretch reads LSFHNISYQE…FRSAGYNYES (243 aa). An ABC transmembrane type-2 domain is found at 381-644; the sequence is KGFPWVTVIQ…TITYVQLLQV (264 aa). The chain crosses the membrane as a helical span at residues 388 to 408; it reads VIQAIITVILATAVGTAFRVL. At 409-420 the chain is on the extracellular side; that stretch reads KNDCIEVQMRAG. A helical membrane pass occupies residues 421 to 441; it reads LLYLLTIFQCITSVSAGELFV. Residues 442 to 469 are Cytoplasmic-facing; the sequence is IDRVRFLHEHTSGYYRVSSYFFGKLLAE. The chain crosses the membrane as a helical span at residues 470–490; sequence LIPRRLLPSTVFSLITYVIAG. Residues 491-498 lie on the Extracellular side of the membrane; the sequence is VKMSMKCF. Residues 499–519 form a helical membrane-spanning segment; the sequence is FTMICTIMVLAYSASSLPLSI. Over 520 to 527 the chain is Cytoplasmic; that stretch reads GAGENAVA. Residues 528–548 form a helical membrane-spanning segment; that stretch reads VPTLLVTIYFVFMLFFSGLSL. The Extracellular portion of the chain corresponds to 549 to 623; that stretch reads YSGSFLPKLS…LSSWGFWENH (75 aa). A helical membrane pass occupies residues 624-644; sequence LALVCTMIILLTITYVQLLQV. The Cytoplasmic portion of the chain corresponds to 645–648; that stretch reads KNIR.

It belongs to the ABC transporter superfamily. ABCG family. Eye pigment precursor importer (TC 3.A.1.204) subfamily. May dimerize with another subunit to form a functional transporter. As to expression, highest levels of expression in thymus and spleen. Detected in lung and small intestine.

It localises to the membrane. This Mus musculus (Mouse) protein is ATP-binding cassette sub-family G member 3 (Abcg3).